A 114-amino-acid polypeptide reads, in one-letter code: UPF0212 protein Mbur_0968 (114 aa).

This sequence belongs to the UPF0212 family.

This is UPF0212 protein Mbur_0968 from Methanococcoides burtonii (strain DSM 6242 / NBRC 107633 / OCM 468 / ACE-M).